A 77-amino-acid polypeptide reads, in one-letter code: U8-lycotoxin-Ls1u (77 aa).

An N-terminal signal peptide occupies residues 1-20 (MKLIIFTGLVLFAIVSLIEA). A propeptide spanning residues 21–26 (QAENEK) is cleaved from the precursor.

Belongs to the neurotoxin 19 (CSTX) family. 08 (U8-Lctx) subfamily. Post-translationally, contains 4 disulfide bonds. As to expression, expressed by the venom gland.

It localises to the secreted. In Lycosa singoriensis (Wolf spider), this protein is U8-lycotoxin-Ls1u.